The chain runs to 275 residues: Large ribosomal subunit protein uL2 (275 aa).

Positions 35–49 (DSQSSTAGRNNNGRI) are enriched in polar residues. Disordered stretches follow at residues 35 to 59 (DSQS…GGHK) and 224 to 275 (AMNP…RHKR). Residues 50 to 59 (TTRHKGGGHK) are compositionally biased toward basic residues.

The protein belongs to the universal ribosomal protein uL2 family. Part of the 50S ribosomal subunit. Forms a bridge to the 30S subunit in the 70S ribosome.

Its function is as follows. One of the primary rRNA binding proteins. Required for association of the 30S and 50S subunits to form the 70S ribosome, for tRNA binding and peptide bond formation. It has been suggested to have peptidyltransferase activity; this is somewhat controversial. Makes several contacts with the 16S rRNA in the 70S ribosome. The protein is Large ribosomal subunit protein uL2 of Burkholderia orbicola (strain AU 1054).